Reading from the N-terminus, the 247-residue chain is MLLLINNLILNDVPTPWGLYFQDSSTPNQEGIIELHDNIMFYLVLILCTVSWLLFSIVKDSSKNPLPHKYLVHGQTIEIIWTILPAVVLLIIAFPSFILLYLCDEVISPAMTIKAIGLQWYWRYEYSDFINDSGETIEFESYVIPEDLLEDGQLRLLDTDTSVVCPVNTHIRFIVSAADVIHDFAIPSLGIKVVASPGRLNQVSALIQREGVYYGMCSETCGVAHSAMPMKIEVVSTKEFLTWLNEQ.

Residues Asp-12 to Asn-38 are Mitochondrial intermembrane-facing. Residues Ile-39–Lys-59 form a helical membrane-spanning segment. At Asp-60–Glu-78 the chain is on the mitochondrial matrix side. Residues Ile-79–Tyr-101 form a helical membrane-spanning segment. The Mitochondrial intermembrane segment spans residues Leu-102–Gln-247. Residues His-182, Cys-217, Glu-219, Cys-221, His-225, and Met-228 each contribute to the Cu cation site. Glu-219 serves as a coordination point for Mg(2+).

It belongs to the cytochrome c oxidase subunit 2 family. Component of the cytochrome c oxidase (complex IV, CIV), a multisubunit enzyme composed of a catalytic core of 3 subunits and several supernumerary subunits. The complex exists as a monomer or a dimer and forms supercomplexes (SCs) in the inner mitochondrial membrane with ubiquinol-cytochrome c oxidoreductase (cytochrome b-c1 complex, complex III, CIII). Cu cation is required as a cofactor. The signal sequence of COX2 is processed by IMP1.

It localises to the mitochondrion inner membrane. The catalysed reaction is 4 Fe(II)-[cytochrome c] + O2 + 8 H(+)(in) = 4 Fe(III)-[cytochrome c] + 2 H2O + 4 H(+)(out). In terms of biological role, component of the cytochrome c oxidase, the last enzyme in the mitochondrial electron transport chain which drives oxidative phosphorylation. The respiratory chain contains 3 multisubunit complexes succinate dehydrogenase (complex II, CII), ubiquinol-cytochrome c oxidoreductase (cytochrome b-c1 complex, complex III, CIII) and cytochrome c oxidase (complex IV, CIV), that cooperate to transfer electrons derived from NADH and succinate to molecular oxygen, creating an electrochemical gradient over the inner membrane that drives transmembrane transport and the ATP synthase. Cytochrome c oxidase is the component of the respiratory chain that catalyzes the reduction of oxygen to water. Electrons originating from reduced cytochrome c in the intermembrane space (IMS) are transferred via the dinuclear copper A center (CU(A)) of subunit 2 and heme A of subunit 1 to the active site in subunit 1, a binuclear center (BNC) formed by heme A3 and copper B (CU(B)). The BNC reduces molecular oxygen to 2 water molecules using 4 electrons from cytochrome c in the IMS and 4 protons from the mitochondrial matrix. This chain is Cytochrome c oxidase subunit 2 (COX2), found in Cyberlindnera saturnus (Yeast).